Here is a 614-residue protein sequence, read N- to C-terminus: MLPIRWFLALLAVFLAVAGLDLWFSQTGARPSSATGEERLDGAAFLAAANAGELREGHIVYRANSTGLADLHAQRKGAAGAGATHVRATARLTDAEVTALRTQHFAEDDPVSYAAARAVSARERTASIVHAIVHPLGLITLIVGILFVVQRYAGRFTAFSAQRLRPVTSGVSFSSVAGCDEAKDEVYEVVEFLRDPARFRQTGGRMPKGVLLVGPPGTGKTMLAKAVAGEARANFYSLSGSDFVELYVGVGASRVRSLFKKARETAPSIIFIDEIDAIGRQRSAAESGGAQQEHDQTLNALLVAMDGFDSDDAVVVFGATNRPDTMDRALLRPGRFDRQVSVGLPDLRGRLAILQVHAGSVKLDPSVDLQEIAKATPGFSGADLANLLNEGAIHAARHRRATILHSDLDEARDKINWGRETRRVMTVQDKAVIAYHEAGHALMQVLSGEDVVRVQKVTIIPRGRSLGSTHFTPERDLFNYSQPQLIAKLRCLMAGRVAEEIALGSITSGASGDIQEATKTARQMVLEWGMSPLGFMALSRPDGDEPLASPQTFHEAERHVRALLDENYAATTRALTTHRAALDAIADELIRCETILGNDVRRIAAQHPPSALAG.

Topologically, residues 1–5 (MLPIR) are cytoplasmic. Residues 6–26 (WFLALLAVFLAVAGLDLWFSQ) traverse the membrane as a helical segment. The Periplasmic segment spans residues 27 to 127 (TGARPSSATG…AVSARERTAS (101 aa)). A helical membrane pass occupies residues 128 to 148 (IVHAIVHPLGLITLIVGILFV). Over 149–614 (VQRYAGRFTA…AQHPPSALAG (466 aa)) the chain is Cytoplasmic. ATP is bound at residue 214 to 221 (GPPGTGKT). Histidine 436 lines the Zn(2+) pocket. Glutamate 437 is a catalytic residue. 2 residues coordinate Zn(2+): histidine 440 and aspartate 513.

It in the central section; belongs to the AAA ATPase family. The protein in the C-terminal section; belongs to the peptidase M41 family. In terms of assembly, homohexamer. Zn(2+) is required as a cofactor.

The protein resides in the cell inner membrane. Functionally, acts as a processive, ATP-dependent zinc metallopeptidase for both cytoplasmic and membrane proteins. Plays a role in the quality control of integral membrane proteins. The chain is ATP-dependent zinc metalloprotease FtsH from Opitutus terrae (strain DSM 11246 / JCM 15787 / PB90-1).